The chain runs to 185 residues: Peptidyl-tRNA hydrolase (185 aa).

Position 14 (Phe-14) interacts with tRNA. The active-site Proton acceptor is His-19. TRNA contacts are provided by Tyr-64, Asn-66, and Asn-112.

The protein belongs to the PTH family. In terms of assembly, monomer.

The protein localises to the cytoplasm. The catalysed reaction is an N-acyl-L-alpha-aminoacyl-tRNA + H2O = an N-acyl-L-amino acid + a tRNA + H(+). Functionally, hydrolyzes ribosome-free peptidyl-tRNAs (with 1 or more amino acids incorporated), which drop off the ribosome during protein synthesis, or as a result of ribosome stalling. Catalyzes the release of premature peptidyl moieties from peptidyl-tRNA molecules trapped in stalled 50S ribosomal subunits, and thus maintains levels of free tRNAs and 50S ribosomes. In Exiguobacterium sp. (strain ATCC BAA-1283 / AT1b), this protein is Peptidyl-tRNA hydrolase.